The primary structure comprises 490 residues: Alginate production protein AlgE (490 aa).

Positions 1–32 (MNSSRSVNPRPSFAPRALSLAIALLLGAPAFA) are cleaved as a signal peptide. Polar residues-rich tracts occupy residues 102-115 (DTLQ…NNSR) and 343-355 (QFQQ…NRSN). Disordered regions lie at residues 102–121 (DTLQ…GREP) and 331–355 (ARGS…NRSN).

Belongs to the AlgE family.

It localises to the cell outer membrane. Its pathway is glycan biosynthesis; alginate biosynthesis. Its function is as follows. Has non-porin-like, channel-forming properties and probably functions as an alginate permeability pore. The protein is Alginate production protein AlgE (algE) of Pseudomonas aeruginosa (strain ATCC 15692 / DSM 22644 / CIP 104116 / JCM 14847 / LMG 12228 / 1C / PRS 101 / PAO1).